Reading from the N-terminus, the 441-residue chain is Tol-Pal system protein TolB (441 aa).

Residues 1 to 39 (MPAMTPAFRRADLTGFLRTYGAALILLLAAMLAWQPAQA) form the signal peptide.

This sequence belongs to the TolB family. In terms of assembly, the Tol-Pal system is composed of five core proteins: the inner membrane proteins TolA, TolQ and TolR, the periplasmic protein TolB and the outer membrane protein Pal. They form a network linking the inner and outer membranes and the peptidoglycan layer.

It is found in the periplasm. Its function is as follows. Part of the Tol-Pal system, which plays a role in outer membrane invagination during cell division and is important for maintaining outer membrane integrity. This Bordetella parapertussis (strain 12822 / ATCC BAA-587 / NCTC 13253) protein is Tol-Pal system protein TolB.